We begin with the raw amino-acid sequence, 187 residues long: MLSSLSPYMANPRNTLSQVLNFGLVLSSAFMVWKALSVITNSASPVVVVLSGSMEPAFQRGDLLFLWNRSPRVDVGEIVVYNVQGKDIPIVHRVMRVFPDVPTTGGEDVEGVEASQKLLTKGDNNLSDDTELYAPGQEFLDRKTDLMGSVRGYVPAIGYVTIMLSEHPWLKSVLLGFMGLMVMLQRE.

At 1 to 18 (MLSSLSPYMANPRNTLSQ) the chain is on the cytoplasmic side. The chain crosses the membrane as a helical; Signal-anchor for type II membrane protein span at residues 19 to 39 (VLNFGLVLSSAFMVWKALSVI). The Lumenal segment spans residues 40–187 (TNSASPVVVV…MGLMVMLQRE (148 aa)). Active-site charge relay system residues include Ser-53 and His-92. Residue Asn-125 is glycosylated (N-linked (GlcNAc...) asparagine). Residue Asp-129 is the Charge relay system of the active site. The C-terminal short (CTS) helix stretch occupies residues 173–184 (VLLGFMGLMVML).

This sequence belongs to the peptidase S26B family. Component of the signal peptidase complex (SPC) composed of a catalytic subunit SEC11 and three accessory subunits SPC1, SPC2 and SPC3. The complex induces a local thinning of the ER membrane which is used to measure the length of the signal peptide (SP) h-region of protein substrates. This ensures the selectivity of the complex towards h-regions shorter than 18-20 amino acids. SPC associates with the translocon complex.

It is found in the endoplasmic reticulum membrane. The enzyme catalyses Cleavage of hydrophobic, N-terminal signal or leader sequences from secreted and periplasmic proteins.. Its function is as follows. Catalytic component of the signal peptidase complex (SPC) which catalyzes the cleavage of N-terminal signal sequences from nascent proteins as they are translocated into the lumen of the endoplasmic reticulum. Specifically cleaves N-terminal signal peptides that contain a hydrophobic alpha-helix (h-region) shorter than 18-20 amino acids. The polypeptide is Signal peptidase complex catalytic subunit SEC11 (SEC11) (Ajellomyces capsulatus (strain G186AR / H82 / ATCC MYA-2454 / RMSCC 2432) (Darling's disease fungus)).